The following is a 201-amino-acid chain: Large ribosomal subunit protein bL25 (201 aa).

It belongs to the bacterial ribosomal protein bL25 family. CTC subfamily. In terms of assembly, part of the 50S ribosomal subunit; part of the 5S rRNA/L5/L18/L25 subcomplex. Contacts the 5S rRNA. Binds to the 5S rRNA independently of L5 and L18.

In terms of biological role, this is one of the proteins that binds to the 5S RNA in the ribosome where it forms part of the central protuberance. The sequence is that of Large ribosomal subunit protein bL25 from Burkholderia multivorans (strain ATCC 17616 / 249).